A 56-amino-acid polypeptide reads, in one-letter code: MRYTTDEGGRLNNFAIEPKVYQAQPWTPQQKVRAALLVGGGLLLVAGLVAIAVGVS.

The Cytoplasmic segment spans residues 1 to 33; that stretch reads MRYTTDEGGRLNNFAIEPKVYQAQPWTPQQKVR. The helical transmembrane segment at 34–54 threads the bilayer; it reads AALLVGGGLLLVAGLVAIAVG. Residues 55–56 are Extracellular-facing; sequence VS.

Part of photosystem II (PSII) assembly intermediate complex PSII-I; crystallized from a strain without psbJ, it forms monomeric PSII before addition of the oxygen evolving complex. PSII-I includes 3 assembly factors not found in mature PSII (Psb27, Psb28 and Psb34). The N-terminus of Psb34 (this protein) binds to CP47 (psbB) in close proximity to PsbH on the cytoplasmic face of PSII.

It localises to the cellular thylakoid membrane. Functionally, involved in photosystem II (PSII) assembly and/or repair, probably in conversion of late PSII assembly intermediates into mature dimeric PSII. This Thermosynechococcus vestitus (strain NIES-2133 / IAM M-273 / BP-1) protein is Photosystem II assembly protein Psb34.